We begin with the raw amino-acid sequence, 142 residues long: Large ribosomal subunit protein uL11 (142 aa).

As to quaternary structure, part of the ribosomal stalk of the 50S ribosomal subunit. Interacts with L10 and the large rRNA to form the base of the stalk. L10 forms an elongated spine to which L12 dimers bind in a sequential fashion forming a multimeric L10(L12)X complex. Lys-40 is trimethylated or acetylated; other modifications may also exist.

Its function is as follows. Forms part of the ribosomal stalk which helps the ribosome interact with GTP-bound translation factors. In Rhodopseudomonas palustris (strain ATCC BAA-98 / CGA009), this protein is Large ribosomal subunit protein uL11.